A 195-amino-acid chain; its full sequence is Probable GTP-binding protein EngB (195 aa).

An EngB-type G domain is found at 22-195 (GLPEIALAGR…WGAIKKMINR (174 aa)). GTP contacts are provided by residues 30-37 (GRSNVGKS), 57-61 (GKTQT), 75-78 (DVPG), 142-145 (TKAD), and 174-176 (FSS). Positions 37 and 59 each coordinate Mg(2+).

It belongs to the TRAFAC class TrmE-Era-EngA-EngB-Septin-like GTPase superfamily. EngB GTPase family. The cofactor is Mg(2+).

Its function is as follows. Necessary for normal cell division and for the maintenance of normal septation. Functionally, binds GTP and GDP. The protein is Probable GTP-binding protein EngB of Bacillus subtilis (strain 168).